The following is a 417-amino-acid chain: Riboflavin biosynthesis protein RibBA (417 aa).

A DHBP synthase region spans residues 1 to 204; that stretch reads MTRLDSIERA…IADLIEWRRK (204 aa). D-ribulose 5-phosphate contacts are provided by residues 28-29, aspartate 33, 141-145, and glutamate 165; these read RE and RPGHT. Glutamate 29 contacts Mg(2+). Histidine 144 is a Mg(2+) binding site. Residues 205-417 are GTP cyclohydrolase II; that stretch reads HEKHVQRIAE…LDDHPEADGA (213 aa). 259–263 provides a ligand contact to GTP; the sequence is RVHSE. Zn(2+) is bound by residues cysteine 264, cysteine 275, and cysteine 277. GTP is bound by residues glutamine 280, 303 to 305, and threonine 325; that span reads EGR. The active-site Proton acceptor; for GTP cyclohydrolase activity is the aspartate 337. The Nucleophile; for GTP cyclohydrolase activity role is filled by arginine 339. GTP contacts are provided by threonine 360 and lysine 365.

In the N-terminal section; belongs to the DHBP synthase family. This sequence in the C-terminal section; belongs to the GTP cyclohydrolase II family. It depends on Mg(2+) as a cofactor. Mn(2+) is required as a cofactor. The cofactor is Zn(2+).

It catalyses the reaction D-ribulose 5-phosphate = (2S)-2-hydroxy-3-oxobutyl phosphate + formate + H(+). The enzyme catalyses GTP + 4 H2O = 2,5-diamino-6-hydroxy-4-(5-phosphoribosylamino)-pyrimidine + formate + 2 phosphate + 3 H(+). The protein operates within cofactor biosynthesis; riboflavin biosynthesis; 2-hydroxy-3-oxobutyl phosphate from D-ribulose 5-phosphate: step 1/1. It functions in the pathway cofactor biosynthesis; riboflavin biosynthesis; 5-amino-6-(D-ribitylamino)uracil from GTP: step 1/4. Its function is as follows. Catalyzes the conversion of D-ribulose 5-phosphate to formate and 3,4-dihydroxy-2-butanone 4-phosphate. Catalyzes the conversion of GTP to 2,5-diamino-6-ribosylamino-4(3H)-pyrimidinone 5'-phosphate (DARP), formate and pyrophosphate. The sequence is that of Riboflavin biosynthesis protein RibBA from Mycobacteroides abscessus (strain ATCC 19977 / DSM 44196 / CCUG 20993 / CIP 104536 / JCM 13569 / NCTC 13031 / TMC 1543 / L948) (Mycobacterium abscessus).